The primary structure comprises 389 residues: tRNA-specific 2-thiouridylase MnmA (389 aa).

ATP is bound by residues 35 to 42 and Met-61; that span reads GMSGGVDS. Residues 121 to 123 form an interaction with target base in tRNA region; that stretch reads NPD. Cys-126 serves as the catalytic Nucleophile. A disulfide bond links Cys-126 and Cys-223. Gly-151 lines the ATP pocket. The tract at residues 173 to 175 is interaction with tRNA; it reads KDQ. The active-site Cysteine persulfide intermediate is Cys-223. Positions 335–336 are interaction with tRNA; it reads RY.

This sequence belongs to the MnmA/TRMU family.

It is found in the cytoplasm. It carries out the reaction S-sulfanyl-L-cysteinyl-[protein] + uridine(34) in tRNA + AH2 + ATP = 2-thiouridine(34) in tRNA + L-cysteinyl-[protein] + A + AMP + diphosphate + H(+). Catalyzes the 2-thiolation of uridine at the wobble position (U34) of tRNA, leading to the formation of s(2)U34. This Actinobacillus pleuropneumoniae serotype 3 (strain JL03) protein is tRNA-specific 2-thiouridylase MnmA.